The primary structure comprises 75 residues: MNEELTFEEEMMRLEEIVNTLEKGNLMLEESFNLFKEGVEISKRLEKRLSEVEGKITLLINENEEIDFKEEEKDV.

This sequence belongs to the XseB family. As to quaternary structure, heterooligomer composed of large and small subunits.

Its subcellular location is the cytoplasm. It carries out the reaction Exonucleolytic cleavage in either 5'- to 3'- or 3'- to 5'-direction to yield nucleoside 5'-phosphates.. Its function is as follows. Bidirectionally degrades single-stranded DNA into large acid-insoluble oligonucleotides, which are then degraded further into small acid-soluble oligonucleotides. This is Exodeoxyribonuclease 7 small subunit from Thermoanaerobacter sp. (strain X514).